A 261-amino-acid chain; its full sequence is tRNA pseudouridine synthase A (261 aa).

Aspartate 51 functions as the Nucleophile in the catalytic mechanism. A substrate-binding site is contributed by tyrosine 109.

It belongs to the tRNA pseudouridine synthase TruA family. Homodimer.

It carries out the reaction uridine(38/39/40) in tRNA = pseudouridine(38/39/40) in tRNA. In terms of biological role, formation of pseudouridine at positions 38, 39 and 40 in the anticodon stem and loop of transfer RNAs. This chain is tRNA pseudouridine synthase A, found in Shewanella baltica (strain OS223).